The primary structure comprises 591 residues: Proteasome-associated ATPase (591 aa).

Residues 10–77 (VAAAEELHAL…LREEVDRLGQ (68 aa)) adopt a coiled-coil conformation. 278–283 (GCGKTL) lines the ATP pocket. Residues 590-591 (YL) are docks into pockets in the proteasome alpha-ring.

Belongs to the AAA ATPase family. In terms of assembly, homohexamer. Assembles into a hexameric ring structure that likely caps the 20S proteasome core. Can form a complex composed of two stacked hexameric rings in vitro. Probably interacts with the prokaryotic ubiquitin-like protein Pup through a hydrophobic interface; the expected interacting region of ARC lies in its N-terminal coiled-coil domain. There is likely one Pup binding site per ARC hexamer ring. Upon ATP-binding, the C-terminus of ARC probably interacts with the alpha-rings of the proteasome core, possibly by binding to the intersubunit pockets.

Its pathway is protein degradation; proteasomal Pup-dependent pathway. With respect to regulation, ATPase activity is inhibited by N-ethylmaleimide (NEM) but not by sodium azide. Its function is as follows. ATPase which is responsible for recognizing, binding, unfolding and translocation of pupylated proteins into the bacterial 20S proteasome core particle. May be essential for opening the gate of the 20S proteasome via an interaction with its C-terminus, thereby allowing substrate entry and access to the site of proteolysis. Thus, the C-termini of the proteasomal ATPase may function like a 'key in a lock' to induce gate opening and therefore regulate proteolysis. The sequence is that of Proteasome-associated ATPase from Rhodococcus erythropolis (Arthrobacter picolinophilus).